We begin with the raw amino-acid sequence, 307 residues long: Oxygen-dependent coproporphyrinogen-III oxidase (307 aa).

Serine 99 serves as a coordination point for substrate. A divalent metal cation-binding residues include histidine 103 and histidine 113. Histidine 113 serves as the catalytic Proton donor. Residue asparagine 115–arginine 117 participates in substrate binding. A divalent metal cation contacts are provided by histidine 152 and histidine 182. Positions tyrosine 247 to arginine 282 are important for dimerization. A substrate-binding site is contributed by glycine 265 to arginine 267.

The protein belongs to the aerobic coproporphyrinogen-III oxidase family. In terms of assembly, homodimer. A divalent metal cation serves as cofactor.

The protein localises to the cytoplasm. The catalysed reaction is coproporphyrinogen III + O2 + 2 H(+) = protoporphyrinogen IX + 2 CO2 + 2 H2O. It functions in the pathway porphyrin-containing compound metabolism; protoporphyrin-IX biosynthesis; protoporphyrinogen-IX from coproporphyrinogen-III (O2 route): step 1/1. Functionally, involved in the heme biosynthesis. Catalyzes the aerobic oxidative decarboxylation of propionate groups of rings A and B of coproporphyrinogen-III to yield the vinyl groups in protoporphyrinogen-IX. This Burkholderia lata (strain ATCC 17760 / DSM 23089 / LMG 22485 / NCIMB 9086 / R18194 / 383) protein is Oxygen-dependent coproporphyrinogen-III oxidase.